The primary structure comprises 380 residues: NF-kappa-B inhibitor-like protein 1 (380 aa).

A disordered region spans residues 1-34; sequence MSNPSPQVPEEEASTSVCRPKSSMASTSRRQRRE. ANK repeat units lie at residues 64 to 93 and 97 to 133; these read GQPP…DPAH and HGDT…IKNK. Disordered regions lie at residues 131–166 and 185–293; these read KNKD…EWRQ and GDAS…RGSL. At Ser150 the chain carries Phosphoserine. Residues 237 to 286 show a composition bias toward basic and acidic residues; the sequence is QQEEEQRLFRERARAKEEELRESRARRAQEALGDREPKPTRAGPREEHPR.

As to quaternary structure, interacts with CACTIN (via N-terminal domain); the interaction occurs in a pro-inflammatory-independent manner.

It localises to the nucleus. Its function is as follows. Involved in the regulation of innate immune response. Acts as negative regulator of Toll-like receptor and interferon-regulatory factor (IRF) signaling pathways. Contributes to the negative regulation of transcriptional activation of NF-kappa-B target genes in response to endogenous pro-inflammatory stimuli. In Pan troglodytes (Chimpanzee), this protein is NF-kappa-B inhibitor-like protein 1 (NFKBIL1).